The sequence spans 290 residues: N-acetylmannosamine kinase (290 aa).

Residues 6 to 13 and 132 to 139 contribute to the ATP site; these read ALDIGGTK and GVGGGIIL. Residues histidine 156, cysteine 166, cysteine 168, and cysteine 173 each coordinate Zn(2+).

Belongs to the ROK (NagC/XylR) family. NanK subfamily. As to quaternary structure, homodimer.

It catalyses the reaction an N-acyl-D-mannosamine + ATP = an N-acyl-D-mannosamine 6-phosphate + ADP + H(+). Its pathway is amino-sugar metabolism; N-acetylneuraminate degradation; D-fructose 6-phosphate from N-acetylneuraminate: step 2/5. Its function is as follows. Catalyzes the phosphorylation of N-acetylmannosamine (ManNAc) to ManNAc-6-P. This chain is N-acetylmannosamine kinase, found in Yersinia pseudotuberculosis serotype O:3 (strain YPIII).